The chain runs to 308 residues: 2-methylisocitrate lyase (308 aa).

51 to 53 contributes to the substrate binding site; the sequence is SGA. Residues Asp-90 and Asp-92 each coordinate Mg(2+). Substrate is bound by residues 127-128, Arg-160, Glu-190, 212-214, Arg-243, and Arg-272; these read CG and NMT.

It belongs to the isocitrate lyase/PEP mutase superfamily. Methylisocitrate lyase family. As to quaternary structure, homotetramer; dimer of dimers. It depends on Mg(2+) as a cofactor.

The catalysed reaction is (2S,3R)-3-hydroxybutane-1,2,3-tricarboxylate = pyruvate + succinate. The protein operates within organic acid metabolism; propanoate degradation. Its function is as follows. Involved in the catabolism of short chain fatty acids (SCFA) via the 2-methylcitrate cycle I (propionate degradation route). Catalyzes the thermodynamically favored C-C bond cleavage of (2R,3S)-2-methylisocitrate to yield pyruvate and succinate via an alpha-carboxy-carbanion intermediate. The chain is 2-methylisocitrate lyase from Aeropyrum pernix (strain ATCC 700893 / DSM 11879 / JCM 9820 / NBRC 100138 / K1).